A 468-amino-acid polypeptide reads, in one-letter code: MAARGSGPRALRLLLLVQLVAGRCGLAGAAGGAQRGLSEPSSIAKHEDSLLKDLFQDYERWVRPVEHLNDKIKIKFGLAISQLVDVDEKNQLMTTNVWLKQEWIDVKLRWNPDDYGGIKVIRVPSDSVWTPDIVLFDNADGRFEGTSTKTVIRYNGTVTWTPPANYKSSCTIDVTFFPFDLQNCSMKFGSWTYDGSQVDIILEDQDVDKRDFFDNGEWEIVSATGSKGNRTDSCCWYPYVTYSFVIKRLPLFYTLFLIIPCIGLSFLTVLVFYLPSNEGEKICLCTSVLVSLTVFLLVIEEIIPSSSKVIPLIGEYLVFTMIFVTLSIMVTVFAINIHHRSSSTHNAMAPLVRKIFLHTLPKLLCMRSHVDRYFTQKEETESGSGPKSSRNTLEAALDSIRYITRHIMKENDVREVVEDWKFIAQVLDRMFLWTFLFVSIVGSLGLFVPVIYKWANILIPVHIGNANK.

Positions M1–G22 are cleaved as a signal peptide. Topologically, residues R23 to T254 are extracellular. N-linked (GlcNAc...) asparagine glycosylation is found at N155, N183, and N229. C170 and C184 are disulfide-bonded. Cysteines 234 and 235 form a disulfide. A run of 3 helical transmembrane segments spans residues L255–P275, I282–I302, and L317–I337. The Cytoplasmic segment spans residues H338–R429. A helical transmembrane segment spans residues M430–I451. The Extracellular segment spans residues Y452–K468.

The protein belongs to the ligand-gated ion channel (TC 1.A.9) family. Acetylcholine receptor (TC 1.A.9.1) subfamily. Alpha-5/CHRNA5 sub-subfamily. As to quaternary structure, neuronal AChR that forms heteropentamers composed of two different type of subunits: alpha and non-alpha (beta). CHRNA5/alpha-5 subunit is only able to form functional nAChRs when co-assembled with another alpha subunit, can be combined to CHRNA4/alpha-4 or CHRNA3/alpha-3 and CHRNB4/beta-4 or CHRNB2/beta-2 to give rise to functional receptors. Interacts with LYPD6.

It is found in the synaptic cell membrane. It localises to the cell membrane. It carries out the reaction Ca(2+)(in) = Ca(2+)(out). The catalysed reaction is K(+)(in) = K(+)(out). It catalyses the reaction Na(+)(in) = Na(+)(out). Activated by a myriad of ligands such as acetylcholine, cytisine, nicotine, choline and epibatidine. In terms of biological role, component of neuronal acetylcholine receptors (nAChRs) that function as pentameric, ligand-gated cation channels with high calcium permeability among other activities. nAChRs are excitatory neurotrasnmitter receptors formed by a collection of nAChR subunits known to mediate synaptic transmission in the nervous system and the neuromuscular junction. Each nAchR subunit confers differential attributes to channel properties, including activation, deactivation and desensitization kinetics, pH sensitivity, cation permeability, and binding to allosteric modulators. Has an accessory rather than functional role and is only able to form functional nAChRs when co-assembled with another beta subunit. Participates in pentameric assemblies along with CHRNA3, CHRNA4, CHRNB2 and CHRNB4. Increases receptor sensitivity to acetylcholine and nicotine when associated with CHRNA4 and CHRNB2. Plays a role in nicotine addiction. The chain is Neuronal acetylcholine receptor subunit alpha-5 from Homo sapiens (Human).